A 235-amino-acid chain; its full sequence is Large ribosomal subunit protein uL1 (235 aa).

The protein belongs to the universal ribosomal protein uL1 family. Part of the 50S ribosomal subunit.

Binds directly to 23S rRNA. The L1 stalk is quite mobile in the ribosome, and is involved in E site tRNA release. Functionally, protein L1 is also a translational repressor protein, it controls the translation of the L11 operon by binding to its mRNA. This Prochlorococcus marinus (strain NATL1A) protein is Large ribosomal subunit protein uL1.